Consider the following 289-residue polypeptide: Pyridoxal kinase PdxY (289 aa).

Residues S9 and 44–45 (TQ) each bind substrate. ATP is bound by residues D112, V144, E149, and K182. A substrate-binding site is contributed by D221.

This sequence belongs to the pyridoxine kinase family. PdxY subfamily. Homodimer. The cofactor is Mg(2+).

It catalyses the reaction pyridoxal + ATP = pyridoxal 5'-phosphate + ADP + H(+). Its pathway is cofactor metabolism; pyridoxal 5'-phosphate salvage; pyridoxal 5'-phosphate from pyridoxal: step 1/1. Pyridoxal kinase involved in the salvage pathway of pyridoxal 5'-phosphate (PLP). Catalyzes the phosphorylation of pyridoxal to PLP. The protein is Pyridoxal kinase PdxY of Vibrio campbellii (strain ATCC BAA-1116).